We begin with the raw amino-acid sequence, 191 residues long: Guanylate kinase (191 aa).

The region spanning 9 to 187 (GQLIVITGPS…SLIALETAIF (179 aa)) is the Guanylate kinase-like domain. 16–23 (GPSGVGKG) is an ATP binding site.

This sequence belongs to the guanylate kinase family.

Its subcellular location is the cytoplasm. The catalysed reaction is GMP + ATP = GDP + ADP. In terms of biological role, essential for recycling GMP and indirectly, cGMP. The sequence is that of Guanylate kinase from Thermosynechococcus vestitus (strain NIES-2133 / IAM M-273 / BP-1).